A 486-amino-acid chain; its full sequence is Cysteine--tRNA ligase (486 aa).

Cysteine 29 provides a ligand contact to Zn(2+). The 'HIGH' region signature appears at 31–41 (VTVYDYCHLGH). Zn(2+)-binding residues include cysteine 217, histidine 242, and glutamate 246. Residues 274-278 (KMSKS) carry the 'KMSKS' region motif. Position 277 (lysine 277) interacts with ATP.

The protein belongs to the class-I aminoacyl-tRNA synthetase family. As to quaternary structure, monomer. It depends on Zn(2+) as a cofactor.

It is found in the cytoplasm. It carries out the reaction tRNA(Cys) + L-cysteine + ATP = L-cysteinyl-tRNA(Cys) + AMP + diphosphate. The protein is Cysteine--tRNA ligase of Thermosynechococcus vestitus (strain NIES-2133 / IAM M-273 / BP-1).